We begin with the raw amino-acid sequence, 79 residues long: Defensin-1 (79 aa).

A signal peptide spans Met1–Ala23. Intrachain disulfides connect Cys42–Cys69, Cys55–Cys75, and Cys59–Cys77.

The protein belongs to the invertebrate defensin family. Type 1 subfamily.

The protein localises to the secreted. The chain is Defensin-1 (SMD1) from Stomoxys calcitrans (Stable fly).